The following is a 205-amino-acid chain: Adenylyl-sulfate kinase (205 aa).

39-46 (GLSGAGKS) is an ATP binding site. Ser-113 functions as the Phosphoserine intermediate in the catalytic mechanism.

This sequence belongs to the APS kinase family.

It carries out the reaction adenosine 5'-phosphosulfate + ATP = 3'-phosphoadenylyl sulfate + ADP + H(+). It participates in sulfur metabolism; hydrogen sulfide biosynthesis; sulfite from sulfate: step 2/3. Its function is as follows. Catalyzes the synthesis of activated sulfate. This is Adenylyl-sulfate kinase from Vibrio parahaemolyticus serotype O3:K6 (strain RIMD 2210633).